Reading from the N-terminus, the 302-residue chain is Putative peptide permease protein BOV_A0350 (302 aa).

The disordered stretch occupies residues 1–22 (MRSSIHASRLRKMGQSIPASTG). 6 helical membrane-spanning segments follow: residues 38–58 (IFGLVLLTPLLFAVLTYPLWL), 101–121 (LLVAVSSVVLSTAIGFLIGAI), 147–167 (IFLLVLASIIGSGIWSTVVVI), 200–222 (AGLGHLLFRHGLPNSIDILVVYA), 230–250 (ILLEAGLSFLGLGVPPPAASW), and 268–288 (WQWLFPGGALVLAVLAINFIG). One can recognise an ABC transmembrane type-1 domain in the interval 97-288 (GRISLLVAVS…LAVLAINFIG (192 aa)).

This sequence belongs to the binding-protein-dependent transport system permease family. As to quaternary structure, the complex is composed of two ATP-binding proteins (BOV_A0347 and BOV_A0348), two transmembrane proteins (BOV_A0350 and BOV_A0351) and a solute-binding protein (BOV_A0352).

It is found in the cell inner membrane. Its function is as follows. Probably part of an ABC transporter complex that could be involved in peptide import. Probably responsible for the translocation of the substrate across the membrane. In Brucella ovis (strain ATCC 25840 / 63/290 / NCTC 10512), this protein is Putative peptide permease protein BOV_A0350.